Reading from the N-terminus, the 209-residue chain is Glycolipid transfer protein A (209 aa).

2 repeat units span residues 45-55 and 56-66. The tract at residues 45–66 is 2 X 12 AA approximate tandem repeats; it reads IKADITGNITKIRSVYESNPTK. 48–55 contributes to the beta-D-galactosyl-(1-&gt;4)-beta-D-glucosyl-(1&lt;-&gt;1)-N-[(9Z)-octadecenoyl]-sphing-4-enine binding site; it reads DITGNITK. Histidine 140 and tyrosine 207 together coordinate beta-D-galactosyl-(1-&gt;4)-beta-D-glucosyl-(1&lt;-&gt;1)-N-[(9Z)-octadecenoyl]-sphing-4-enine.

This sequence belongs to the GLTP family.

The protein localises to the cytoplasm. Accelerates the intermembrane transfer of various glycolipids. Catalyzes the transfer of various glycosphingolipids between membranes but does not catalyze the transfer of phospholipids. May be involved in the intracellular translocation of glucosylceramides. This is Glycolipid transfer protein A (gltp-a) from Xenopus laevis (African clawed frog).